A 574-amino-acid chain; its full sequence is MVIMEGFKIAMKVIDEIDKKIKPLIGWEKADEVVKIGADGTPTKRIDVIAENMAINILEKFSGGILISEEIGLKVVGDELEYIFILDPIDGTYNALKSIPIYSTSIAVAKIKGEDKKLIRENINNIDWIKSFIANKYTINDLYVGIVKNLATGDLYYAIKGEGSFLEKDGEKIKIETKNIKDLKEASVGLFVYGLSNDLLEFLKERKVRRVRLFGSMALEMCYVVSGALDAYINVNENSRLCDIAGAYVICREGNAIVTNKNGKPLNMKLHLMERTSLIVSNKYLHKKLIALFGNRWIIKPVKFGIVVREDKEEAINLAIEICKYLKDKNIPFCVEDFLRERVGGDKFDISAISHIIAIGGDGTILRASRLVNGETIPIIAVNMGKVGFLAEFCKDEVFEIIDKVIYGEYEIEKRSKLSCKIIKDNRVIKTPSALNEMVVITKNPAKILEFDVYVNDTLVENVRADGIIVSTPTGSTAYSLSAGGPIVEPNVDCFIISPICPFKLSSRPLVISASNRIKLKLKLEKPALLVIDGSVEYEINKDDELIFEKSDSYAYFVKGQSFYNKLSRCLGIK.

The segment at 1 to 297 (MVIMEGFKIA…KLIALFGNRW (297 aa)) is NADP phosphatase. The Mg(2+) site is built by glutamate 69, aspartate 87, isoleucine 89, aspartate 90, and aspartate 243. The segment at 302 to 574 (VKFGIVVRED…NKLSRCLGIK (273 aa)) is NAD kinase. The active-site Proton acceptor is aspartate 362. Residues 362 to 363 (DG), arginine 367, 436 to 437 (NE), lysine 447, arginine 464, aspartate 466, and 477 to 482 (TAYSLS) contribute to the NAD(+) site.

The protein in the N-terminal section; belongs to the inositol monophosphatase superfamily. This sequence in the C-terminal section; belongs to the NAD kinase family. In terms of assembly, homotetramer. The cofactor is Mg(2+).

It is found in the cytoplasm. The catalysed reaction is NAD(+) + ATP = ADP + NADP(+) + H(+). It carries out the reaction NADP(+) + H2O = phosphate + NAD(+). It catalyses the reaction UTP + NAD(+) = UDP + NADP(+) + H(+). The enzyme catalyses 5-methyl-UTP + NAD(+) = 5-methyl-UDP + NADP(+) + H(+). The catalysed reaction is CTP + NAD(+) = CDP + NADP(+) + H(+). It carries out the reaction GTP + NAD(+) = GDP + NADP(+) + H(+). It catalyses the reaction dATP + NAD(+) = dADP + NADP(+) + H(+). The enzyme catalyses NADPH + H2O = phosphate + NADH. The catalysed reaction is adenosine 2'-phosphate + H2O = adenosine + phosphate. It carries out the reaction beta-D-fructose 1,6-bisphosphate + H2O = beta-D-fructose 6-phosphate + phosphate. Its activity is regulated as follows. Phosphatase activity is slightly inhibited by ADP, NADH and ATP, and moderately inhibited by NAD and 5'-AMP. Kinase activity is slightly inhibited by ADP and NADP. Its function is as follows. Involved in the regulation of the intracellular balance between NAD(H) and NADP(H), and is a key enzyme in the biosynthesis of NADP. Catalyzes the phosphorylation and dephosphorylation of NAD and NADP, respectively. Although it shows conflicting dual activities and is able to supply NADP, it seems that its physiological role is to prevent excess accumulation of NADP. Kinase can use ATP and other nucleoside triphosphates (UTP, TTP, CTP, GTP) as well as inorganic polyphosphate (poly(P)) as phosphoryl donors, however poly(P) is not considered to be the physiological phosphoryl donor. NAD is the preferred substrate for the kinase, but NADH can also be used as phosphoryl acceptor. Phosphatase can use NADP or NADPH as phosphoryl donor, but NADP is the preferred substrate. Phosphatase also has an activity toward the terminal phosphate group at C-2 of adenosine in 2'-AMP and toward the phosphate group at C-1 of fructose 1,6-bisphosphate, but not toward inositol 1-phosphate. This Methanocaldococcus jannaschii (strain ATCC 43067 / DSM 2661 / JAL-1 / JCM 10045 / NBRC 100440) (Methanococcus jannaschii) protein is Bifunctional NADP phosphatase/NAD kinase.